A 293-amino-acid polypeptide reads, in one-letter code: Bifunctional protein FolD (293 aa).

Residues 165–167 (GRS), S190, and I231 each bind NADP(+).

Belongs to the tetrahydrofolate dehydrogenase/cyclohydrolase family. Homodimer.

It catalyses the reaction (6R)-5,10-methylene-5,6,7,8-tetrahydrofolate + NADP(+) = (6R)-5,10-methenyltetrahydrofolate + NADPH. The catalysed reaction is (6R)-5,10-methenyltetrahydrofolate + H2O = (6R)-10-formyltetrahydrofolate + H(+). The protein operates within one-carbon metabolism; tetrahydrofolate interconversion. Catalyzes the oxidation of 5,10-methylenetetrahydrofolate to 5,10-methenyltetrahydrofolate and then the hydrolysis of 5,10-methenyltetrahydrofolate to 10-formyltetrahydrofolate. In Synechococcus sp. (strain CC9311), this protein is Bifunctional protein FolD.